Here is a 345-residue protein sequence, read N- to C-terminus: S-adenosylmethionine:tRNA ribosyltransferase-isomerase (345 aa).

It belongs to the QueA family. In terms of assembly, monomer.

Its subcellular location is the cytoplasm. It catalyses the reaction 7-aminomethyl-7-carbaguanosine(34) in tRNA + S-adenosyl-L-methionine = epoxyqueuosine(34) in tRNA + adenine + L-methionine + 2 H(+). It participates in tRNA modification; tRNA-queuosine biosynthesis. Functionally, transfers and isomerizes the ribose moiety from AdoMet to the 7-aminomethyl group of 7-deazaguanine (preQ1-tRNA) to give epoxyqueuosine (oQ-tRNA). The sequence is that of S-adenosylmethionine:tRNA ribosyltransferase-isomerase from Shewanella sp. (strain MR-4).